Reading from the N-terminus, the 639-residue chain is Chaperone protein DnaK (639 aa).

Thr197 is modified (phosphothreonine; by autocatalysis). Residues 600–639 (SGAQGGAQAGPDMNAGQSNAGQNNGKQDDNVQDADFEEVK) form a disordered region. Over residues 613-624 (NAGQSNAGQNNG) the composition is skewed to low complexity. Residues 629-639 (NVQDADFEEVK) show a composition bias toward acidic residues.

Belongs to the heat shock protein 70 family.

Its function is as follows. Acts as a chaperone. The chain is Chaperone protein DnaK from Bacteroides fragilis (strain ATCC 25285 / DSM 2151 / CCUG 4856 / JCM 11019 / LMG 10263 / NCTC 9343 / Onslow / VPI 2553 / EN-2).